We begin with the raw amino-acid sequence, 221 residues long: GTP-binding nuclear protein Ran2 (221 aa).

A Small GTPase Ran-type domain is found at 10-174 (DYPSFKLVIV…LYLARKLAGD (165 aa)). 21 to 28 (DGGTGKTT) is a GTP binding site. Residues 40 to 48 (KKYEPTIGV) form a switch-I region. GTP contacts are provided by residues Gly-71, 125–128 (NKVD), and 153–155 (SAK). Residues 71 to 87 (GQEKFGGLRDGYYIHGQ) form a switch-II region.

This sequence belongs to the small GTPase superfamily. Ran family. Found in a nuclear export complex with RanGTP, exportin and pre-miRNA.

It localises to the nucleus. Functionally, GTP-binding protein involved in nucleocytoplasmic transport. Required for the import of protein into the nucleus and also for RNA export. Involved in chromatin condensation and control of cell cycle. The chain is GTP-binding nuclear protein Ran2 (RAN2) from Solanum lycopersicum (Tomato).